The sequence spans 88 residues: uncharacterized protein (88 aa).

2 helical membrane passes run 5-25 (AIPF…LLFV) and 36-56 (CYYL…VMIF).

The protein resides in the membrane. This is an uncharacterized protein from Saccharomyces cerevisiae (strain ATCC 204508 / S288c) (Baker's yeast).